We begin with the raw amino-acid sequence, 175 residues long: Adenine phosphoribosyltransferase (175 aa).

It belongs to the purine/pyrimidine phosphoribosyltransferase family. In terms of assembly, homodimer.

Its subcellular location is the cytoplasm. The catalysed reaction is AMP + diphosphate = 5-phospho-alpha-D-ribose 1-diphosphate + adenine. It participates in purine metabolism; AMP biosynthesis via salvage pathway; AMP from adenine: step 1/1. Its function is as follows. Catalyzes a salvage reaction resulting in the formation of AMP, that is energically less costly than de novo synthesis. This Clavibacter michiganensis subsp. michiganensis (strain NCPPB 382) protein is Adenine phosphoribosyltransferase.